We begin with the raw amino-acid sequence, 881 residues long: MNSAEIMADLSNHTPMMQQYLKVKKDYQHALLFYRMGDFYELFFEDAHLAAKLLGITLTHRGKANGNPIPMAGVPYHSAEGYLARLVKAGRTVAICEQVGEVTGKGPVERKVVRILTPGTLTDDALLTSYQSSNLVALCIHQNQIGFALLDLSAGIFKVQQQDYKPEQLPIELARLMPSEILIDEDLVDPNIIEQIKKHLDCPVTKRPNVDFNLNNAQKTLCDQFSVSTLSGFGLDPLPLAKAAAAALIHYAKETQKTALPHIRSILLEQSSDFIALDPITRRNLEIIEPLFEHGTSLFQLVNDCQTAMGGRLLSRTLMQPVRDTALLDARLDAIEQLIQGYHESPVRLVLKEIGDIERVLSRVALGSARPRDLVQLRHACAQIPFLRNALAPVVQAKKSKLLGQLDQELGDFKSLHQHLMAAIVENPPVLLRDGNVIAEGYDAELDELRQIRDHAGQFLIDLEIKERERTGISTLKIGYNRVSGYYIELTRAQAEQAPADYIRRQTLKNAERYITPELKSFEDKVLSSESRALAREKALFEALLENLRENIAHLQMMSSAIAQIDVIANFAHQARLNNWARPEFTPETGIKIQGGRHPVVEALSKAPFTPNDTFLDVQHRMAIITGPNMGGKSTFMRQTALISLLAYCGSYVPARAAKLGPIDRIFTRIGSADDLSTGKSTFMVEMTETSQILHHATNQSLVLMDEVGRGTSTYDGLSLAWACVVDLTKRVKCLCLFATHYFELTELGSEPGIDNYHVTAQELNGNLILLHKVQQGPASQSHGLQVAKLAGIPANVIKEAQKRLRILEKQQQQHLQTSVQSDLFATLDSEVTPSTQVIEKVIEVEVSSPALDLLKQIEVDNLTPRQALEQLYELKAALNS.

627–634 contacts ATP; the sequence is GPNMGGKS.

This sequence belongs to the DNA mismatch repair MutS family.

Functionally, this protein is involved in the repair of mismatches in DNA. It is possible that it carries out the mismatch recognition step. This protein has a weak ATPase activity. This is DNA mismatch repair protein MutS from Acinetobacter baumannii (strain AB307-0294).